Reading from the N-terminus, the 418-residue chain is Hydroxysteroid dehydrogenase-like protein 2 (418 aa).

Residues 17 to 23, Lys-42, and Asp-74 each bind NADP(+); that span reads GASRGIG. Position 42 is an N6-(2-hydroxyisobutyryl)lysine (Lys-42). Residue Lys-116 is modified to N6-acetyllysine. Residue Tyr-168 is the Proton acceptor of the active site. Residue Lys-172 participates in NADP(+) binding. The segment at 287–310 is disordered; it reads STGAVPEFKEEKPQPQPKPRSGAV. In terms of domain architecture, SCP2 spans 306 to 415; sequence RSGAVEETFR…KLEKLMNQMN (110 aa). An N6-succinyllysine modification is found at Lys-318.

The protein belongs to the short-chain dehydrogenases/reductases (SDR) family.

Its subcellular location is the peroxisome. The protein localises to the mitochondrion. In terms of biological role, has apparently no steroid dehydrogenase activity. Controls bile acid (BA) and lipid metabolism in response to nutritional cues. This Pongo abelii (Sumatran orangutan) protein is Hydroxysteroid dehydrogenase-like protein 2 (HSDL2).